We begin with the raw amino-acid sequence, 343 residues long: Succinylglutamate desuccinylase (343 aa).

Zn(2+) contacts are provided by H60, E63, and H157. E221 is an active-site residue.

Belongs to the AspA/AstE family. Succinylglutamate desuccinylase subfamily. The cofactor is Zn(2+).

The catalysed reaction is N-succinyl-L-glutamate + H2O = L-glutamate + succinate. It functions in the pathway amino-acid degradation; L-arginine degradation via AST pathway; L-glutamate and succinate from L-arginine: step 5/5. Functionally, transforms N(2)-succinylglutamate into succinate and glutamate. The polypeptide is Succinylglutamate desuccinylase (Idiomarina loihiensis (strain ATCC BAA-735 / DSM 15497 / L2-TR)).